Consider the following 680-residue polypeptide: Galactose oxidase (680 aa).

The signal sequence occupies residues 1–24 (MKHFLSLALCFSSINAVAVTVPHK). Residues 25–41 (SGGTGSPEGSLQFLSLR) constitute a propeptide that is removed on maturation. The 148-residue stretch at 42 to 189 (ASAPIGSAIS…SIAEINVFQA (148 aa)) folds into the F5/8 type C domain. Cys59 and Cys68 form a disulfide bridge. 5 Kelch repeats span residues 223–268 (RVLM…HDMF), 279–321 (QIVV…TMSD), 323–372 (RVFT…LYRS), 436–490 (KILT…VLPD), and 492–544 (STFI…LLLP). Residues 269 to 313 (CPGISMDGNGQIVVTGGNDAKKTSLYDSSSDSWIPGPDMQVARGY) constitute a cross-link (3'-(S-cysteinyl)-tyrosine (Cys-Tyr)). Tyr313 provides a ligand contact to Cu cation. Cu cation is bound by residues Tyr536 and His537. Tyr536 functions as the Proton acceptor in the catalytic mechanism. Residues Cys556 and Cys559 are joined by a disulfide bond. Residue His622 coordinates Cu cation.

In terms of assembly, monomer. The cofactor is Cu(2+). Galactose oxidase contains a protein-derived free radical cofactor. In the active state, Tyr-313, which is cross-linked to Cys-269 via a thioether bond, is oxidized to a radical and acts with Cu(2+) as a two-electron acceptor in the oxidation reaction. The cross-link is believed to modulate the redox potential of the tyrosyl radical, which is further stabilized by a stacking interaction with Trp-331 in the active site. The post-translational formation of the cross-link is closely linked to the propeptide cleavage event, and both are copper-dependent, autocatalytic processes. The propeptide may act as an intramolecular chaperone, facilitating thioester bond formation and copper binding by positioning of active-site residues, including copper ligands.

It localises to the secreted. It carries out the reaction D-galactose + O2 = D-galacto-hexodialdose + H2O2. Its function is as follows. Catalyzes the sterospecific oxidation of primary alcohols to the corresponding aldehydes. The biologically relevant substrate of the enzyme is not known as the enzyme exhibits broad substrate specificity from small alcohols through sugars to oligo- and polysaccharides. The polypeptide is Galactose oxidase (GAOA) (Gibberella zeae (strain ATCC MYA-4620 / CBS 123657 / FGSC 9075 / NRRL 31084 / PH-1) (Wheat head blight fungus)).